The following is a 147-amino-acid chain: Large ribosomal subunit protein uL13 (147 aa).

It belongs to the universal ribosomal protein uL13 family. As to quaternary structure, part of the 50S ribosomal subunit.

This protein is one of the early assembly proteins of the 50S ribosomal subunit, although it is not seen to bind rRNA by itself. It is important during the early stages of 50S assembly. In Rhodococcus jostii (strain RHA1), this protein is Large ribosomal subunit protein uL13.